Consider the following 144-residue polypeptide: Phospholipase A2 (144 aa).

Residues Met-1 to Ala-15 form the signal peptide. The propeptide at Ala-16–Thr-22 is activation peptide. 7 cysteine pairs are disulfide-bonded: Cys-33–Cys-99, Cys-49–Cys-144, Cys-51–Cys-67, Cys-66–Cys-127, Cys-73–Cys-120, Cys-83–Cys-113, and Cys-106–Cys-118. The Ca(2+) site is built by Tyr-50, Gly-52, and Gly-54. The active site involves His-70. Asp-71 serves as a coordination point for Ca(2+). Residue Asp-121 is part of the active site.

Belongs to the phospholipase A2 family. In terms of assembly, monomer or homodimer. Ca(2+) is required as a cofactor. In terms of processing, activated by trypsin cleavage in the duodenum. Can also be activated by thrombin or autocatalytically.

It localises to the secreted. The catalysed reaction is a 1,2-diacyl-sn-glycero-3-phosphocholine + H2O = a 1-acyl-sn-glycero-3-phosphocholine + a fatty acid + H(+). It catalyses the reaction 1,2-ditetradecanoyl-sn-glycero-3-phosphocholine + H2O = 1-tetradecanoyl-sn-glycero-3-phosphocholine + tetradecanoate + H(+). It carries out the reaction 1,2-dihexadecanoyl-sn-glycero-3-phosphocholine + H2O = 1-hexadecanoyl-sn-glycero-3-phosphocholine + hexadecanoate + H(+). The enzyme catalyses 1-hexadecanoyl-2-(9Z-octadecenoyl)-sn-glycero-3-phosphocholine + H2O = 1-hexadecanoyl-sn-glycero-3-phosphocholine + (9Z)-octadecenoate + H(+). The catalysed reaction is 1-hexadecanoyl-2-(5Z,8Z,11Z,14Z-eicosatetraenoyl)-sn-glycero-3-phosphocholine + H2O = 1-hexadecanoyl-sn-glycero-3-phosphocholine + (5Z,8Z,11Z,14Z)-eicosatetraenoate + H(+). It catalyses the reaction 1-hexadecanoyl-2-(9Z-octadecenoyl)-sn-glycero-3-phospho-(1'-sn-glycerol) + H2O = 1-hexadecanoyl-sn-glycero-3-phospho-(1'-sn-glycerol) + (9Z)-octadecenoate + H(+). It carries out the reaction N-hexadecanoyl-1,2-di-(9Z-octadecenoyl)-sn-glycero-3-phosphoethanolamine + H2O = N-hexadecanoyl-1-(9Z-octadecenoyl)-sn-glycero-3-phosphoethanolamine + (9Z)-octadecenoate + H(+). The enzyme catalyses 1-hexadecanoyl-2-(9Z,12Z-octadecadienoyl)-sn-glycero-3-phosphoethanolamine + H2O = 1-hexadecanoyl-sn-glycero-3-phosphoethanolamine + (9Z,12Z)-octadecadienoate + H(+). The catalysed reaction is N,1-dihexadecanoyl-2-(9Z,12Z-octadecadienoyl)-sn-glycero-3-phosphoethanolamine + H2O = N,1-dihexadecanoyl-sn-glycero-3-phosphoethanolamine + (9Z,12Z)-octadecadienoate + H(+). Its function is as follows. Secretory calcium-dependent phospholipase A2 that primarily targets dietary phospholipids in the intestinal tract. Hydrolyzes the ester bond of the fatty acyl group attached at sn-2 position of phospholipids (phospholipase A2 activity) with preference for phosphatidylethanolamines and phosphatidylglycerols over phosphatidylcholines. May play a role in the biosynthesis of N-acyl ethanolamines that regulate energy metabolism and inflammation in the intestinal tract. Hydrolyzes N-acyl phosphatidylethanolamines to N-acyl lysophosphatidylethanolamines, which are further cleaved by a lysophospholipase D to release N-acyl ethanolamines. May act in an autocrine and paracrine manner. Has anti-helminth activity in a process regulated by gut microbiota. Upon helminth infection of intestinal epithelia, directly affects phosphatidylethanolamine contents in the membrane of helminth larvae, likely controlling an array of phospholipid-mediated cellular processes such as membrane fusion and cell division while providing for better immune recognition, ultimately reducing larvae integrity and infectivity. This chain is Phospholipase A2 (PLA2G1B), found in Oryctolagus cuniculus (Rabbit).